The sequence spans 287 residues: Diaminopimelate epimerase (287 aa).

Substrate contacts are provided by Asn15 and Asn66. The active-site Proton donor is Cys75. Residues 76–77 (GN), Asn170, Asn203, and 221–222 (ER) contribute to the substrate site. Cys230 serves as the catalytic Proton acceptor. 231–232 (GT) contacts substrate.

Belongs to the diaminopimelate epimerase family. Homodimer.

The protein resides in the cytoplasm. It catalyses the reaction (2S,6S)-2,6-diaminopimelate = meso-2,6-diaminopimelate. The protein operates within amino-acid biosynthesis; L-lysine biosynthesis via DAP pathway; DL-2,6-diaminopimelate from LL-2,6-diaminopimelate: step 1/1. Its function is as follows. Catalyzes the stereoinversion of LL-2,6-diaminopimelate (L,L-DAP) to meso-diaminopimelate (meso-DAP), a precursor of L-lysine and an essential component of the bacterial peptidoglycan. The protein is Diaminopimelate epimerase of Desulfovibrio desulfuricans (strain ATCC 27774 / DSM 6949 / MB).